Here is a 366-residue protein sequence, read N- to C-terminus: DNA replication and repair protein RecF (366 aa).

30–37 (GDNGMGKT) provides a ligand contact to ATP.

It belongs to the RecF family.

The protein localises to the cytoplasm. Its function is as follows. The RecF protein is involved in DNA metabolism; it is required for DNA replication and normal SOS inducibility. RecF binds preferentially to single-stranded, linear DNA. It also seems to bind ATP. In Azobacteroides pseudotrichonymphae genomovar. CFP2, this protein is DNA replication and repair protein RecF.